Reading from the N-terminus, the 306-residue chain is Probable thioesterase atnL (306 aa).

Belongs to the lcsJ thioesterase family.

Its function is as follows. Part of the gene cluster that mediates the biosynthesis of aspercryptins, linear lipopeptides built from six amino acids including 2 highly unusual and nonproteogenic amino acids, 2-amino-octanoic acid (2aoa) and 2-amino-dodecanol (2adol). The core structure of aspercryptins is as follows: Ser/Ala-Thr-Ile/Val-2aoa-Asn-2adol. The first step of aspercryptin biosynthesis is the generation of the fatty acid precursors, octanoic and dodecanoic acids, by the FAS subunits atnF and atnM. The fatty acid precursors are likely transformed into the corresponding alpha-amino fatty acids in three steps. First, they are hydroxylated by the cytochrome P450 monooxygenase atnE, then oxidized to the corresponding alpha-keto acids by the NAD(P)-dependent oxidoreductase atnD, and finally converted to the alpha-amino fatty acids by the PLP-dependent aminotransferases atnH or atnJ. the alpha-amino fatty acids, 2-amino-octanoic and 2-amino-dodecanoic acids, are recognized, activated, and covalently tethered to the NRPS atnA by its fourth and sixth adenylation domains. The second module of atnA is the Thr module and contains an epimerase (E) domain responsible for the epimerization of Thr to D-allo-Thr. Additionally, despite atnA having only one epimerase domain, the first amino acid of aspercryptin A1 is D-Ser, suggesting that serine is either loaded directly as D-Ser on the first module or that the epimerase domain in the threonine module epimerizes both L-Ser and L-Thr. After condensation of the hexapeptide of aspercryptin, the C-terminal reductase (TE) domain might be involved in the reductive release and production of the aldehyde hexapeptide. Further reduction would generate aspercryptins. The variety of aspercryptins produced reflects the flexibility of the atnA NRPS, allowing incorporation of alanine instead of serine, valine for isoleucine, and a C10 fatty amino alcohol instead of the C12 version. AtnB seems to be involved in the selectivity for Ile versus Val by the third module. Moreover, type B, C and D aspercryptins have an additional N-terminal cichorine, acetyl and propionyl group respectively. This chain is Probable thioesterase atnL, found in Emericella nidulans (strain FGSC A4 / ATCC 38163 / CBS 112.46 / NRRL 194 / M139) (Aspergillus nidulans).